The following is a 448-amino-acid chain: Immunoglobulin G-binding protein G (448 aa).

Residues 1–33 (MEKEKKVKYFLRKSAFGLASVSAAFLVGSTVFA) form the signal peptide. 4 tandem repeats follow at residues 104–140 (LAKA…IKDL), 179–215 (LAEA…VKEL), 228–282 (TYKL…TVTE), and 298–352 (TYKL…TVTE). The tract at residues 104–215 (LAKAKADALK…AKTVEGVKEL (112 aa)) is 2 X 37 AA repeats. A 2 X 55 AA repeats region spans residues 228 to 352 (TYKLILNGKT…DATKTFTVTE (125 aa)). The interval 358–422 (PGDAPTEPEK…TLPTTGEGSN (65 aa)) is disordered. Basic and acidic residues predominate over residues 384-412 (AKDDAKKDDTKKEDAKKPEAKKDDAKKAE). The 5 X 5 AA repeats of [DE]-D-A-K-K stretch occupies residues 386–410 (DDAKKDDTKKEDAKKPEAKKDDAKK). Residues 414 to 418 (LPTTG) carry the LPXTG sorting signal motif. The residue at position 417 (Thr417) is a Pentaglycyl murein peptidoglycan amidated threonine. Positions 418-448 (GEGSNPFFTAAALAVMAGAGALAVASKRKED) are cleaved as a propeptide — removed by sortase.

The protein localises to the secreted. It is found in the cell wall. Its function is as follows. Binds to the constant Fc region of IgG with high affinity. In Streptococcus sp. group G, this protein is Immunoglobulin G-binding protein G (spg).